Here is a 105-residue protein sequence, read N- to C-terminus: Heat shock protein HspQ (105 aa).

This sequence belongs to the HspQ family.

The protein localises to the cytoplasm. In terms of biological role, involved in the degradation of certain denaturated proteins, including DnaA, during heat shock stress. This chain is Heat shock protein HspQ, found in Sodalis glossinidius (strain morsitans).